Reading from the N-terminus, the 178-residue chain is MEQYHGTTIVSVRRGNQVALGGDGQVTLGNIVMKGTARKVRRIYNGKVLVGFAGSTADAFSLLDRFEAKLEKYQGNLTRAAVDLAKDWRSDRALRRLEAMLITADRDTTLVITGNGDVLDPEGGIAAIGSGGAYAQSAAKALAENTEMAPKDVVEKALTIAGELCIYTNTNFVIETLE.

Residue T7 is part of the active site. Residues G162, C165, and T168 each contribute to the Na(+) site.

Belongs to the peptidase T1B family. HslV subfamily. As to quaternary structure, a double ring-shaped homohexamer of HslV is capped on each side by a ring-shaped HslU homohexamer. The assembly of the HslU/HslV complex is dependent on binding of ATP.

It localises to the cytoplasm. The catalysed reaction is ATP-dependent cleavage of peptide bonds with broad specificity.. With respect to regulation, allosterically activated by HslU binding. Protease subunit of a proteasome-like degradation complex believed to be a general protein degrading machinery. This is ATP-dependent protease subunit HslV from Cupriavidus necator (strain ATCC 17699 / DSM 428 / KCTC 22496 / NCIMB 10442 / H16 / Stanier 337) (Ralstonia eutropha).